Consider the following 249-residue polypeptide: uncharacterized protein (249 aa).

It localises to the cytoplasm. The protein resides in the nucleus. The protein localises to the nucleolus. This is an uncharacterized protein from Schizosaccharomyces pombe (strain 972 / ATCC 24843) (Fission yeast).